We begin with the raw amino-acid sequence, 282 residues long: Shikimate dehydrogenase (NADP(+)) (282 aa).

Residues 18 to 20 (SRS) and T65 each bind shikimate. Residue K69 is the Proton acceptor of the active site. Position 81 (E81) interacts with NADP(+). Residues N90 and D105 each contribute to the shikimate site. NADP(+)-binding positions include 130 to 134 (GAGGA), 154 to 159 (NRTPAR), and M222. A shikimate-binding site is contributed by Y224. G245 is a binding site for NADP(+).

Belongs to the shikimate dehydrogenase family. Homodimer.

The catalysed reaction is shikimate + NADP(+) = 3-dehydroshikimate + NADPH + H(+). It participates in metabolic intermediate biosynthesis; chorismate biosynthesis; chorismate from D-erythrose 4-phosphate and phosphoenolpyruvate: step 4/7. Involved in the biosynthesis of the chorismate, which leads to the biosynthesis of aromatic amino acids. Catalyzes the reversible NADPH linked reduction of 3-dehydroshikimate (DHSA) to yield shikimate (SA). The chain is Shikimate dehydrogenase (NADP(+)) from Acidovorax ebreus (strain TPSY) (Diaphorobacter sp. (strain TPSY)).